Consider the following 252-residue polypeptide: Aspartate/glutamate leucyltransferase (252 aa).

This sequence belongs to the R-transferase family. Bpt subfamily.

The protein resides in the cytoplasm. It carries out the reaction N-terminal L-glutamyl-[protein] + L-leucyl-tRNA(Leu) = N-terminal L-leucyl-L-glutamyl-[protein] + tRNA(Leu) + H(+). The enzyme catalyses N-terminal L-aspartyl-[protein] + L-leucyl-tRNA(Leu) = N-terminal L-leucyl-L-aspartyl-[protein] + tRNA(Leu) + H(+). Its function is as follows. Functions in the N-end rule pathway of protein degradation where it conjugates Leu from its aminoacyl-tRNA to the N-termini of proteins containing an N-terminal aspartate or glutamate. In Polynucleobacter necessarius subsp. necessarius (strain STIR1), this protein is Aspartate/glutamate leucyltransferase.